We begin with the raw amino-acid sequence, 328 residues long: Peroxidase 71 (328 aa).

The N-terminal stretch at 1–23 (MGLVRSLCLLITFLNCLIISVHG) is a signal peptide. 4 cysteine pairs are disulfide-bonded: Cys44–Cys120, Cys77–Cys82, Cys126–Cys324, and Cys204–Cys235. Catalysis depends on His75, which acts as the Proton acceptor. The Ca(2+) site is built by Asp76, Val79, Gly81, Asp83, and Ser85. Residue Pro167 coordinates substrate. Heme b is bound at residue His197. Residue Thr198 coordinates Ca(2+). Residue Asn213 is glycosylated (N-linked (GlcNAc...) asparagine). The Ca(2+) site is built by Asp248, Ser251, and Asp256. The N-linked (GlcNAc...) asparagine glycan is linked to Asn262.

It belongs to the peroxidase family. Classical plant (class III) peroxidase subfamily. It depends on heme b as a cofactor. Ca(2+) is required as a cofactor. Slightly expressed in roots.

The protein localises to the secreted. The catalysed reaction is 2 a phenolic donor + H2O2 = 2 a phenolic radical donor + 2 H2O. Functionally, removal of H(2)O(2), oxidation of toxic reductants, biosynthesis and degradation of lignin, suberization, auxin catabolism, response to environmental stresses such as wounding, pathogen attack and oxidative stress. These functions might be dependent on each isozyme/isoform in each plant tissue. This is Peroxidase 71 (PER71) from Arabidopsis thaliana (Mouse-ear cress).